Here is a 185-residue protein sequence, read N- to C-terminus: Nucleoside triphosphate pyrophosphatase (185 aa).

Residue Asp70 is the Proton acceptor of the active site.

This sequence belongs to the Maf family. A divalent metal cation serves as cofactor.

It is found in the cytoplasm. The enzyme catalyses a ribonucleoside 5'-triphosphate + H2O = a ribonucleoside 5'-phosphate + diphosphate + H(+). The catalysed reaction is a 2'-deoxyribonucleoside 5'-triphosphate + H2O = a 2'-deoxyribonucleoside 5'-phosphate + diphosphate + H(+). Its function is as follows. Nucleoside triphosphate pyrophosphatase. May have a dual role in cell division arrest and in preventing the incorporation of modified nucleotides into cellular nucleic acids. The chain is Nucleoside triphosphate pyrophosphatase from Nitratiruptor sp. (strain SB155-2).